Reading from the N-terminus, the 1478-residue chain is ATP-binding cassette transporter abc2 (1478 aa).

Topologically, residues 1-25 (MVLEQDLDPFVGGNWMNSAYKGFTF) are vacuolar. Residues 26 to 46 (LSATWLAPNIYLLISGCLQYF) form a helical membrane-spanning segment. The Cytoplasmic segment spans residues 47 to 65 (YEVRKRSHYFHFRRFWTIW). A helical transmembrane segment spans residues 66–85 (LKSLVIMVLLFTHIYDCYKT). N86 is a glycosylation site (N-linked (GlcNAc...) asparagine). Over 86 to 90 (NESVW) the chain is Vacuolar. Residues 91-104 (NVLSIITYFLALFL) traverse the membrane as a helical segment. Residues 105–116 (HVVEQPTLRIPM) are Cytoplasmic-facing. The chain crosses the membrane as a helical span at residues 117–137 (ASLLMFWLFKFLASALVLLLR). Topologically, residues 138 to 154 (PNYTMFPMLNVVPSITF) are vacuolar. The N-linked (GlcNAc...) asparagine glycan is linked to N139. Residues 155–175 (FCSLVCLLAEIYVPPANRVWY) form a helical membrane-spanning segment. At 176–259 (PDDAAELEET…KKSSLYMWGV (84 aa)) the chain is on the cytoplasmic side. The helical transmembrane segment at 260–280 (LFLNHWKLTVVIIVLKLVQDV) threads the bilayer. The 290-residue stretch at 268–557 (TVVIIVLKLV…LPIVVSSVLE (290 aa)) folds into the ABC transmembrane type-1 1 domain. Residues 281-310 (VAFIQPNLIRKIVIFVSSYSSEHPQPPQVG) are Vacuolar-facing. Residues 311 to 331 (FSLAIAMFLTNVVQTALLQQY) form a helical membrane-spanning segment. Residues 332–387 (FQLGMVLGMRWRSELITAIYRKSLRLSSAARQSRSVGDIVNYMSVDTQKVCDLTMF) lie on the Cytoplasmic side of the membrane. A helical membrane pass occupies residues 388–408 (LFVIVSGPFQIVLALTNLYHL). The Vacuolar segment spans residues 409-411 (VGY). The helical transmembrane segment at 412–432 (GALSGAFVTFLLFPCNVVIAS) threads the bilayer. Residues 433 to 495 (IFKRFQNRQM…MLKKIGIVNT (63 aa)) lie on the Cytoplasmic side of the membrane. The helical transmembrane segment at 496–516 (IGNFTWLFAPILVSAATFGTF) threads the bilayer. At 517–539 (IVLYGKTRVLSVDIVFACLSLFN) the chain is on the vacuolar side. A helical membrane pass occupies residues 540–560 (LLQFPLTMLPIVVSSVLEASV). Topologically, residues 561 to 910 (AISRIYGFLT…VKWKVYWTYF (350 aa)) are cytoplasmic. Residues 593–821 (LEIKKGTFSW…PDSQLFQLLS (229 aa)) form the ABC transporter 1 domain. 631 to 638 (GKVGMGKS) lines the ATP pocket. Residues 828 to 867 (TASSTGADTPLSRSQSVITSSTDVTSSASRSSDTVSNYPK) form a disordered region. Over residues 829–840 (ASSTGADTPLSR) the composition is skewed to polar residues. A phosphoserine mark is found at S839, S843, and S863. Positions 841–863 (SQSVITSSTDVTSSASRSSDTVS) are enriched in low complexity. The helical transmembrane segment at 911–931 (KACSLFLIFLYFLFIIGGIGM) threads the bilayer. The region spanning 918-1202 (IFLYFLFIIG…VVRQSVDVET (285 aa)) is the ABC transmembrane type-1 2 domain. The Vacuolar portion of the chain corresponds to 932–968 (NVGTNVWLKHWSEVNTQLGYNPKPYFYLGIYTLFGLL). The helical transmembrane segment at 969 to 990 (SCALISLSSLTITVFCAIKSCR) threads the bilayer. The Cytoplasmic portion of the chain corresponds to 991-1033 (YLHDSMVKAVLRAPMSFFETTPTGRILNRFSSDVYRVDEVISR). The chain crosses the membrane as a helical span at residues 1034–1054 (VFMFFFRNLFQIVFVLAVICY). Residue S1055 is a topological domain, vacuolar. Residues 1056-1076 (SPMFMILIVPLFFLYRYNQVY) traverse the membrane as a helical segment. Residues 1077-1147 (YTQTSRELKR…SSNRWQAIRV (71 aa)) lie on the Cytoplasmic side of the membrane. The helical transmembrane segment at 1148-1168 (EAIGALVVFSSAFFGVLSAVR) threads the bilayer. The Vacuolar portion of the chain corresponds to 1169-1172 (GNPN). A helical membrane pass occupies residues 1173–1193 (SGLVGLSLSYAVQITQSLTFV). The Cytoplasmic segment spans residues 1194-1478 (VRQSVDVETN…YSLAKESGLI (285 aa)). In terms of domain architecture, ABC transporter 2 spans 1239–1473 (IKFDHYSVRY…KASLFYSLAK (235 aa)). An ATP-binding site is contributed by 1273–1280 (GRTGAGKS).

It belongs to the ABC transporter superfamily. ABCC family. Conjugate transporter (TC 3.A.1.208) subfamily.

The protein resides in the vacuole membrane. Functionally, involved in vacuolar sequestration of glutathione S-conjugates. Together with abc4, required for accumulation of a red pigment (ade pigment) in the vacuole of a mutant affected in the adenine biosynthetic pathway. The chain is ATP-binding cassette transporter abc2 (abc2) from Schizosaccharomyces pombe (strain 972 / ATCC 24843) (Fission yeast).